We begin with the raw amino-acid sequence, 264 residues long: Acetylglutamate kinase (264 aa).

Substrate is bound by residues 50-51 (GG), arginine 72, and asparagine 164.

This sequence belongs to the acetylglutamate kinase family. ArgB subfamily.

It is found in the cytoplasm. The catalysed reaction is N-acetyl-L-glutamate + ATP = N-acetyl-L-glutamyl 5-phosphate + ADP. The protein operates within amino-acid biosynthesis; L-arginine biosynthesis; N(2)-acetyl-L-ornithine from L-glutamate: step 2/4. Its function is as follows. Catalyzes the ATP-dependent phosphorylation of N-acetyl-L-glutamate. The sequence is that of Acetylglutamate kinase from Moritella profunda.